The chain runs to 564 residues: Keratin, type II cytoskeletal 6A (564 aa).

Over residues 1–11 the composition is skewed to low complexity; that stretch reads MASTSTTIRSH. The disordered stretch occupies residues 1-23; the sequence is MASTSTTIRSHSSSRRGFSANSA. An N-acetylalanine modification is found at Ala-2. Residues 2–162 are head; it reads ASTSTTIRSH…DPTIQRVRAE (161 aa). The segment at 163-198 is coil 1A; sequence EREQIKTLNNKFASFIDKVRFLEQQNKVLETKWTLL. One can recognise an IF rod domain in the interval 163–476; the sequence is EREQIKTLNN…KLLEGEECRL (314 aa). Residues 199-217 form a linker 1 region; it reads QEQGTKTVRQNLEPLFEQY. The coil 1B stretch occupies residues 218–309; sequence INNLRRQLDS…ALYDAELSQM (92 aa). The segment at 310–333 is linker 12; that stretch reads QTHISDTSVVLSMDNNRNLDLDSI. The coil 2 stretch occupies residues 334-472; sequence IAEVKAQYEE…ATYRKLLEGE (139 aa). The tail stretch occupies residues 473–564; sequence ECRLNGEGVG…SSSSRKSYKH (92 aa).

Belongs to the intermediate filament family. In terms of assembly, heterodimer of a type I and a type II keratin. KRT6 isomers associate with KRT16 and/or KRT17. Interacts with TCHP. As to expression, expressed in the corneal epithelium (at protein level).

Its function is as follows. Epidermis-specific type I keratin involved in wound healing. Involved in the activation of follicular keratinocytes after wounding, while it does not play a major role in keratinocyte proliferation or migration. Participates in the regulation of epithelial migration by inhibiting the activity of SRC during wound repair. This chain is Keratin, type II cytoskeletal 6A (KRT6A), found in Homo sapiens (Human).